The following is a 248-amino-acid chain: Aspartate/glutamate leucyltransferase (248 aa).

This sequence belongs to the R-transferase family. Bpt subfamily.

It localises to the cytoplasm. The catalysed reaction is N-terminal L-glutamyl-[protein] + L-leucyl-tRNA(Leu) = N-terminal L-leucyl-L-glutamyl-[protein] + tRNA(Leu) + H(+). The enzyme catalyses N-terminal L-aspartyl-[protein] + L-leucyl-tRNA(Leu) = N-terminal L-leucyl-L-aspartyl-[protein] + tRNA(Leu) + H(+). Functionally, functions in the N-end rule pathway of protein degradation where it conjugates Leu from its aminoacyl-tRNA to the N-termini of proteins containing an N-terminal aspartate or glutamate. In Methylobacterium nodulans (strain LMG 21967 / CNCM I-2342 / ORS 2060), this protein is Aspartate/glutamate leucyltransferase.